A 305-amino-acid polypeptide reads, in one-letter code: MSRLRAPVAKFLADGLKGIRSTALAGSRLSNCRYTSTSSKDTDTSSHMTHFGFKDVPEDEKEHLVKNVFSSVAKKYDEMNDAMSLGIHRLWKNIFVSRLNPGNSTVPMKILDVAGGTGDIAFRILNHATNHNGDRNTRVIVADINPDMLSVGLRRSKKTPYYDSGRVEFIEQNAEILDKIPDNSIDMYTIAFGIRNCTHIPKVLEQAYRVLKPGGVFSCLEFSKVYPAPLAELYRQYSFKILPLLGTIIAGDSQSYEYLVESIERFPDAKTFAKMIEDAGFTLAGETGYETLSFGIAAIHTGIKL.

The transit peptide at M1–Y34 directs the protein to the mitochondrion. S-adenosyl-L-methionine is bound by residues T117, D143, and N173–A174.

Belongs to the class I-like SAM-binding methyltransferase superfamily. MenG/UbiE family. As to quaternary structure, component of a multi-subunit COQ enzyme complex, composed of at least COQ3, COQ4, COQ5, COQ6, COQ7 and COQ9.

The protein resides in the mitochondrion inner membrane. The catalysed reaction is 2-methoxy-6-(all-trans-decaprenyl)benzene-1,4-diol + S-adenosyl-L-methionine = 5-methoxy-2-methyl-3-(all-trans-decaprenyl)benzene-1,4-diol + S-adenosyl-L-homocysteine + H(+). It functions in the pathway cofactor biosynthesis; ubiquinone biosynthesis. Methyltransferase required for the conversion of 2-decaprenyl-6-methoxy-1,4-benzoquinol (DDMQH2) to 2-decaprenyl-3-methyl-6-methoxy-1,4-benzoquinol (DMQH2). This Schizosaccharomyces pombe (strain 972 / ATCC 24843) (Fission yeast) protein is 2-methoxy-6-polyprenyl-1,4-benzoquinol methylase, mitochondrial.